The primary structure comprises 262 residues: Lysosomal-associated transmembrane protein 5 (262 aa).

The next 5 helical transmembrane spans lie at 19 to 39 (IATTALAIYHVIMSVLLFIEH), 64 to 84 (ISSFLLITMLFIISLSLLIGV), 92 to 112 (LLPFLSLQIMDYLLCLLTLLG), 134 to 154 (FPLMTLQLLDFCLSILTLCSS), and 184 to 204 (FIKMMIIFSIAFITVLIFKVY). The residue at position 259 (Tyr259) is a Phosphotyrosine.

This sequence belongs to the LAPTM4/LAPTM5 transporter family. Binds to ubiquitin. As to expression, preferentially expressed in adult hematopoietic tissues. High levels in lymphoid and myeloid tissues. Highly expressed in peripheral blood leukocytes, thymus, spleen and lung, followed by placenta, liver and kidney.

Its subcellular location is the lysosome membrane. May have a special functional role during embryogenesis and in adult hematopoietic cells. This Homo sapiens (Human) protein is Lysosomal-associated transmembrane protein 5 (LAPTM5).